The chain runs to 793 residues: Probable phosphoketolase (793 aa).

It belongs to the XFP family. Thiamine diphosphate is required as a cofactor.

The sequence is that of Probable phosphoketolase from Gloeobacter violaceus (strain ATCC 29082 / PCC 7421).